The chain runs to 864 residues: Alanine--tRNA ligase (864 aa).

Residues H534, H538, C639, and H643 each coordinate Zn(2+).

It belongs to the class-II aminoacyl-tRNA synthetase family. Requires Zn(2+) as cofactor.

It is found in the cytoplasm. It carries out the reaction tRNA(Ala) + L-alanine + ATP = L-alanyl-tRNA(Ala) + AMP + diphosphate. Functionally, catalyzes the attachment of alanine to tRNA(Ala) in a two-step reaction: alanine is first activated by ATP to form Ala-AMP and then transferred to the acceptor end of tRNA(Ala). Also edits incorrectly charged Ser-tRNA(Ala) and Gly-tRNA(Ala) via its editing domain. In Onion yellows phytoplasma (strain OY-M), this protein is Alanine--tRNA ligase.